A 247-amino-acid polypeptide reads, in one-letter code: Probable transcriptional regulatory protein YPK_2146 (247 aa).

The protein belongs to the TACO1 family.

The protein resides in the cytoplasm. In Yersinia pseudotuberculosis serotype O:3 (strain YPIII), this protein is Probable transcriptional regulatory protein YPK_2146.